The sequence spans 1849 residues: Protein virilizer (1849 aa).

Basic and acidic residues-rich tracts occupy residues 206–219 (QHYH…QREM), 242–265 (THSE…DWSR), 281–291 (RSRSDADEHKW), 332–347 (HSSE…EERS), and 785–818 (VEAK…AAEE). Disordered regions lie at residues 206–364 (QHYH…DEII), 783–818 (RVVE…AAEE), 1557–1584 (SASM…SSSG), 1666–1686 (GESK…EMTP), 1715–1782 (RGRG…NRGS), and 1798–1849 (IGSP…PYLR). Residues 1671–1684 (TLNLSGSPQSNREM) are compositionally biased toward polar residues. Residues 1732–1742 (SRPPNTSRPPS) show a composition bias toward low complexity. The segment covering 1800-1818 (SPSSWTESGGGSYRSTSES) has biased composition (polar residues).

This sequence belongs to the vir family. In terms of assembly, component of the WMM complex, a N6-methyltransferase complex composed of a catalytic subcomplex, named MAC, and of an associated subcomplex, named MACOM. The MAC subcomplex is composed of Ime4/Mettl3 and Mettl14. The MACOM subcomplex is composed of fl(2)d, Flacc/Xio, Hakai, vir, and, in some cases of nito. Part of a complex containing fl(2)d, Sxl and vir.

The protein localises to the nucleus. Functionally, associated component of the WMM complex, a complex that mediates N6-methyladenosine (m6A) methylation of mRNAs, a modification that plays a role in the efficiency of mRNA splicing and is required for sex determination. Required for sex determination and dosage compensation via Sxl alternative splicing: m6A methylation acts as a key regulator of Sxl pre-mRNA and promotes female-specific alternative splicing of Sxl, which determines female physiognomy. M6A methylation is also required for neuronal functions. Required for proper inclusion of regulated exons in Ubx transcripts, leading to isoforms Ia/b and IIa/b. This is Protein virilizer (vir) from Drosophila pseudoobscura pseudoobscura (Fruit fly).